Consider the following 440-residue polypeptide: Adenylosuccinate synthetase (440 aa).

GTP-binding positions include 14-20 (GDEGKGK) and 42-44 (GHT). Asp-15 acts as the Proton acceptor in catalysis. Mg(2+) contacts are provided by Asp-15 and Gly-42. Residues 15 to 18 (DEGK), 40 to 43 (NAGH), Thr-131, Arg-145, Gln-226, Thr-241, and Arg-313 each bind IMP. The active-site Proton donor is the His-43. 309 to 315 (ATTGRQR) lines the substrate pocket. GTP-binding positions include Arg-315, 341–343 (KLD), and 423–425 (STG).

It belongs to the adenylosuccinate synthetase family. Homodimer. Mg(2+) is required as a cofactor.

It is found in the cytoplasm. It catalyses the reaction IMP + L-aspartate + GTP = N(6)-(1,2-dicarboxyethyl)-AMP + GDP + phosphate + 2 H(+). Its pathway is purine metabolism; AMP biosynthesis via de novo pathway; AMP from IMP: step 1/2. Plays an important role in the de novo pathway of purine nucleotide biosynthesis. Catalyzes the first committed step in the biosynthesis of AMP from IMP. This is Adenylosuccinate synthetase from Hydrogenovibrio crunogenus (strain DSM 25203 / XCL-2) (Thiomicrospira crunogena).